The following is a 355-amino-acid chain: U5 small nuclear ribonucleoprotein 40 kDa protein (355 aa).

WD repeat units lie at residues 60-99 (GHKGEIYSCKFNSYGTALASGGSDKEIFLWNVYGECINYS), 103-142 (GHKGTILELHWSTDSNEIYTACTDKSIGVWDSNKGELIKR), 145-185 (EHSG…STHL), 187-226 (QHKYPVTSVCFSDASDQLITGGIDNVIRVWDIRNQEDPLY), 230-269 (SHQDTITSTSVSKDGAYLLSNSMDNSCKIWDIRPYAPPNR), 280-319 (NFEKNLIKSSWSIDGRRIGCGSSDRQVYIWDTNTKQLQYC), and 322-355 (GHSGTVNEVTFHPNEPIIASCSSDKTIYLGEIKP).

As to quaternary structure, component of the pre-catalytic and catalytic spliceosome complexes. Component of the postcatalytic spliceosome P complex. Part of the U5 snRNP complex. Component of the U4/U6-U5 tri-snRNP complex.

It is found in the nucleus. Functionally, required for pre-mRNA splicing as component of the activated spliceosome. Component of the U5 small nuclear ribonucleoprotein (snRNP) complex and the U4/U6-U5 tri-snRNP complex, building blocks of the spliceosome. The polypeptide is U5 small nuclear ribonucleoprotein 40 kDa protein (snrnp40) (Dictyostelium discoideum (Social amoeba)).